Consider the following 343-residue polypeptide: N-acetyl-gamma-glutamyl-phosphate reductase (343 aa).

Cys146 is an active-site residue.

Belongs to the NAGSA dehydrogenase family. Type 1 subfamily.

It is found in the cytoplasm. It carries out the reaction N-acetyl-L-glutamate 5-semialdehyde + phosphate + NADP(+) = N-acetyl-L-glutamyl 5-phosphate + NADPH + H(+). The protein operates within amino-acid biosynthesis; L-arginine biosynthesis; N(2)-acetyl-L-ornithine from L-glutamate: step 3/4. Functionally, catalyzes the NADPH-dependent reduction of N-acetyl-5-glutamyl phosphate to yield N-acetyl-L-glutamate 5-semialdehyde. The chain is N-acetyl-gamma-glutamyl-phosphate reductase from Paenarthrobacter aurescens (strain TC1).